The sequence spans 162 residues: Ribosome maturation factor RimM (162 aa).

Residues 86–160 form the PRC barrel domain; the sequence is EGRYYYFALI…GIHVDPIPGL (75 aa).

This sequence belongs to the RimM family. As to quaternary structure, binds ribosomal protein uS19.

It localises to the cytoplasm. Its function is as follows. An accessory protein needed during the final step in the assembly of 30S ribosomal subunit, possibly for assembly of the head region. Essential for efficient processing of 16S rRNA. May be needed both before and after RbfA during the maturation of 16S rRNA. It has affinity for free ribosomal 30S subunits but not for 70S ribosomes. This Thermus thermophilus (strain ATCC BAA-163 / DSM 7039 / HB27) protein is Ribosome maturation factor RimM.